The following is a 356-amino-acid chain: Carbohydrate sulfotransferase 10 (356 aa).

Topologically, residues 1–6 are cytoplasmic; the sequence is MHHQWL. The chain crosses the membrane as a helical; Signal-anchor for type II membrane protein span at residues 7 to 27; the sequence is LLAACFWVIFMFMVASKFITL. Over 28–356 the chain is Lumenal; sequence TFKDPDGYSA…GYQKPDFLLN (329 aa). Residue Asn99 is glycosylated (N-linked (GlcNAc...) asparagine). Residues 127–133 and 189–197 each bind 3'-phosphoadenylyl sulfate; these read PKVGNTQ and RDPFERLIS. Residues Asn228 and Asn316 are each glycosylated (N-linked (GlcNAc...) asparagine).

The protein belongs to the sulfotransferase 2 family.

It localises to the golgi apparatus membrane. It carries out the reaction 3-O-{beta-D-GlcA-(1-&gt;[3)-alpha-D-Xyl-(1-&gt;3)-beta-D-GlcA-(1-&gt;](n)-4)-beta-D-Xyl-(1-&gt;4)-Rib-ol-P-Rib-ol-P-3-beta-D-GalNAc-(1-&gt;3)-beta-D-GlcNAc-(1-&gt;4)-O-6-P-alpha-D-Man}-L-Thr-[protein] + 3'-phosphoadenylyl sulfate = 3-O-{O-3-S-beta-D-GlcA-(1-&gt;[3)-alpha-D-Xyl-(1-&gt;3)-beta-D-GlcA-(1-&gt;](n)-4)-beta-D-Xyl-(1-&gt;4)-Rib-ol-P-Rib-ol-P-3-beta-D-GalNAc-(1-&gt;3)-beta-D-GlcNAc-(1-&gt;4)-O-6-P-alpha-D-Man}-L-Thr-[protein] + adenosine 3',5'-bisphosphate + H(+). The catalysed reaction is 17beta-estradiol 3-O-(beta-D-glucuronate) + 3'-phosphoadenylyl sulfate = 17beta-estradiol 3-O-(3-sulfo-beta-D-glucuronate) + adenosine 3',5'-bisphosphate + H(+). It catalyses the reaction 17beta-estradiol 3-O-(beta-D-glucuronate) 17-sulfate + 3'-phosphoadenylyl sulfate = 17beta-estradiol 3-O-(3-sulfo-beta-D-glucuronate) 17-sulfate + adenosine 3',5'-bisphosphate + H(+). The enzyme catalyses 17beta-estradiol 17-O-(beta-D-glucuronate) + 3'-phosphoadenylyl sulfate = 17beta-estradiol 17-O-(3-sulfo-beta-D-glucuronate) + adenosine 3',5'-bisphosphate + H(+). It carries out the reaction 16alpha,17beta-estriol 3-O-(beta-D-glucuronate) + 3'-phosphoadenylyl sulfate = 16alpha,17beta-estriol 3-O-(3-sulfo-beta-D-glucuronate) + adenosine 3',5'-bisphosphate + H(+). The catalysed reaction is 16alpha,17beta-estriol 16-O-(beta-D-glucuronate) + 3'-phosphoadenylyl sulfate = 16alpha,17beta-estriol 16-O-(3-sulfo-beta-D-glucuronate) + adenosine 3',5'-bisphosphate + H(+). It catalyses the reaction 16alpha,17beta-estriol 17-O-(beta-D-glucuronate) + 3'-phosphoadenylyl sulfate = 16alpha,17beta-estriol 17-O-(3-sulfo-beta-D-glucuronate) + adenosine 3',5'-bisphosphate + H(+). The enzyme catalyses estrone 3-O-(beta-D-glucuronate) + 3'-phosphoadenylyl sulfate = estrone 3-O-(3-sulfo-beta-D-glucuronate) + adenosine 3',5'-bisphosphate + H(+). It carries out the reaction 3alpha,20alpha-dihydroxy-5beta-pregnane 3-O-(beta-D-glucuronate) + 3'-phosphoadenylyl sulfate = 3alpha,20alpha-dihydroxy-5beta-pregnane 3-O-(3-sulfo-beta-D-glucuronate) + adenosine 3',5'-bisphosphate + H(+). The catalysed reaction is testosterone 17-O-(beta-D-glucuronate) + 3'-phosphoadenylyl sulfate = testosterone 17-O-(3-sulfo-beta-D-glucuronate) + adenosine 3',5'-bisphosphate + H(+). It catalyses the reaction 3beta-androst-5-en-17-one 3-O-(beta-D-glucuronate) + 3'-phosphoadenylyl sulfate = 3beta-androst-5-en-17-one 3-O-(3-sulfo-beta-D-glucuronate) + adenosine 3',5'-bisphosphate + H(+). The enzyme catalyses 3alpha,17alpha-dihydroxy-5beta-androstane-11-one-17beta-carboxylate 3-O-(beta-D-glucuronate) + 3'-phosphoadenylyl sulfate = 3alpha,17alpha-dihydroxy-5beta-androstane-11-one-17beta-carboxylate 3-O-(3-sulfo-beta-D-glucuronate) + adenosine 3',5'-bisphosphate + H(+). It carries out the reaction 3alpha-hydroxyetiocholan-17-one 3-O-(beta-D-glucuronate) + 3'-phosphoadenylyl sulfate = 3alpha-hydroxyetiocholan-17-one 3-O-(3-sulfo-beta-D-glucuronate) + adenosine 3',5'-bisphosphate + H(+). Its pathway is steroid metabolism. It participates in protein modification; carbohydrate sulfation. Catalyzes the transfer of sulfate from 3'-phosphoadenylyl sulfate (PAPS) to position 3 of terminal glucuronic acid of both protein- and lipid-linked oligosaccharides. Participates in biosynthesis of HNK-1 carbohydrate structure 3-O-sulfo-beta-D-GlcA-(1-&gt;3)-beta-D-Gal-(1-&gt;4)-D-GlcNAc-R, a sulfated glucuronyl-lactosaminyl residue carried by many neural recognition molecules, which is involved in cell interactions during ontogenetic development and in synaptic plasticity in the adult. May be indirectly involved in synapse plasticity of the hippocampus, via its role in HNK-1 biosynthesis. Sulfates terminal glucuronyl residue of the laminin globular (LG)-domain binding epitope on DAG1/alpha-dystroglycan and prevents further polymerization by LARGE1 glycosyltransferase. Likely defines the chain length of LG epitope, conferring binding specificity to extracellular matrix components. Plays a role in down-regulating the steroid hormones. Sulfates glucuronidated estrogens and androgens with an impact in hormone cycle and fertility. Has a preference for glucuronyl moiety at the 3-hydroxyl group of a sterol ring rather than the 17-hydroxyl group, showing high catalytic efficiency for 17beta-estradiol 3-O-(beta-D-glucuronate) and dehydroepiandrosterone 3-O-(beta-D-glucuronate) hormones. The sequence is that of Carbohydrate sulfotransferase 10 from Mus musculus (Mouse).